An 840-amino-acid chain; its full sequence is MTQELKSKLLSFFKFIFATALFIFVIFTLYRELSHINFKETFIQFGKINRLWLVLLFAGGGLSLILLSLYDIILVKALKLKMPLIRVFRVSYIINALNSIIGFGGFIGAGVRAFVYKNYTNDTKKLVQYISIILVSMLTGLSLLSILVVLRIFNASHMIDEISWVRWILYIVALFLPIFIFYTVARPVDRNNRYMGVYCTVVSCVEWMAAATVLYFAALIVDIHISFMTFVGIFVIAALSGLVSFIPGGFGAFDLVVLLGLKSLGISEEKILLALVLYRFAYYFVPVMIALILSSFEFGNTAKKYLDNSKYFIPVKDFTSFLRSYQKDILAKVPSFSLAILIFLTSIIFFINNLTIVYDGLYDGNHFAYYIALAIQTSACLLLILNVRGIYKGSRRAIIYAFISIILIASATIYTYASFLLLSWLIIIFVLLILAYQRAQVLKRPLRFKKLAFMLLLSIFILYLNHILISGTLYALDVYHIEIDTSLLRYYFWMTIVIIMLLVGVIAWLFDYKYKRPHHSIDLTLCDAIIQKYGGNYLSHLVYSGDKDCFFNENKDSFIMYRYKSNALVVLGDPIGNTKSFESLLEAFYQFAEYQGYEIIFYQISDQYMPLYHNFGNQFFKLGEEAIIDLTTFTTSGKKRRGFRATLNKFDDLNINFEIIEPPFTQDFFDELKFVSDKWLDGRSEMHFSVGQFTQTYLSKAPIGVMRDHSGKMIAFCSLMPTYSNNAISVDLIRWLPELDLPLMDGLYLHMLLWSKEKGYKAFNMGMATLSNVGQLHYSYLRERMAGRVFEHFNGLYRFQGLRRYKEKYSPNWEPRFLVYQKHYSLWESMLKVMRVIRHK.

The Cytoplasmic portion of the chain corresponds to M1–K8. Residues L9–L29 form a helical membrane-spanning segment. Residues Y30–W52 are Extracellular-facing. The chain crosses the membrane as a helical span at residues L53–I73. Residues L74–R89 are Cytoplasmic-facing. The helical transmembrane segment at V90 to G110 threads the bilayer. At V111–Y129 the chain is on the extracellular side. The helical transmembrane segment at I130–L150 threads the bilayer. At R151–E161 the chain is on the cytoplasmic side. The helical transmembrane segment at I162–Y182 threads the bilayer. Residues T183–T200 are Extracellular-facing. The chain crosses the membrane as a helical span at residues V201–V221. The Cytoplasmic portion of the chain corresponds to D222–T229. A helical transmembrane segment spans residues F230–F250. Over G251–K270 the chain is Extracellular. Residues I271 to L291 traverse the membrane as a helical segment. The Cytoplasmic portion of the chain corresponds to I292–S337. Residues L338–Y358 form a helical membrane-spanning segment. Over D359–H366 the chain is Extracellular. Residues F367 to V387 traverse the membrane as a helical segment. The Cytoplasmic segment spans residues R388 to K392. Residues G393 to I413 form a helical membrane-spanning segment. Residues Y414 to T415 are Extracellular-facing. A helical transmembrane segment spans residues Y416 to Y436. Residues Q437–K450 lie on the Cytoplasmic side of the membrane. The chain crosses the membrane as a helical span at residues L451 to G471. The Extracellular portion of the chain corresponds to T472–R489. A helical transmembrane segment spans residues Y490–F510. The Cytoplasmic portion of the chain corresponds to D511 to K840.

This sequence belongs to the LPG synthase family.

The protein localises to the cell membrane. It catalyses the reaction L-lysyl-tRNA(Lys) + a 1,2-diacyl-sn-glycero-3-phospho-(1'-sn-glycerol) = a 1,2-diacyl-sn-glycero-3-phospho-1'-(3'-O-L-lysyl)-sn-glycerol + tRNA(Lys). Catalyzes the transfer of a lysyl group from L-lysyl-tRNA(Lys) to membrane-bound phosphatidylglycerol (PG), which produces lysylphosphatidylglycerol (LPG), a major component of the bacterial membrane with a positive net charge. LPG synthesis contributes to bacterial virulence as it is involved in the resistance mechanism against cationic antimicrobial peptides (CAMP) produces by the host's immune system (defensins, cathelicidins) and by the competing microorganisms (bacteriocins). In fact, the modification of anionic phosphatidylglycerol with positively charged L-lysine results in repulsion of the peptides. In Staphylococcus epidermidis (strain ATCC 35984 / DSM 28319 / BCRC 17069 / CCUG 31568 / BM 3577 / RP62A), this protein is Phosphatidylglycerol lysyltransferase (mprF).